The chain runs to 602 residues: UvrABC system protein C (602 aa).

A GIY-YIG domain is found at 15–100 (DQSGVYHYFD…IKQLKPKYNI (86 aa)). A UVR domain is found at 206-241 (SKLISRLKERMEKLAENLRFEEAGELRDRIEKIKRI).

It belongs to the UvrC family. In terms of assembly, interacts with UvrB in an incision complex.

It is found in the cytoplasm. The UvrABC repair system catalyzes the recognition and processing of DNA lesions. UvrC both incises the 5' and 3' sides of the lesion. The N-terminal half is responsible for the 3' incision and the C-terminal half is responsible for the 5' incision. The chain is UvrABC system protein C from Wolinella succinogenes (strain ATCC 29543 / DSM 1740 / CCUG 13145 / JCM 31913 / LMG 7466 / NCTC 11488 / FDC 602W) (Vibrio succinogenes).